A 127-amino-acid chain; its full sequence is Aspartate 1-decarboxylase (127 aa).

The active-site Schiff-base intermediate with substrate; via pyruvic acid is the Ser25. Ser25 carries the post-translational modification Pyruvic acid (Ser). Residue Thr57 participates in substrate binding. Tyr58 serves as the catalytic Proton donor. 73-75 (GAA) lines the substrate pocket.

This sequence belongs to the PanD family. In terms of assembly, heterooctamer of four alpha and four beta subunits. Pyruvate serves as cofactor. Post-translationally, is synthesized initially as an inactive proenzyme, which is activated by self-cleavage at a specific serine bond to produce a beta-subunit with a hydroxyl group at its C-terminus and an alpha-subunit with a pyruvoyl group at its N-terminus.

The protein resides in the cytoplasm. The enzyme catalyses L-aspartate + H(+) = beta-alanine + CO2. It participates in cofactor biosynthesis; (R)-pantothenate biosynthesis; beta-alanine from L-aspartate: step 1/1. Catalyzes the pyruvoyl-dependent decarboxylation of aspartate to produce beta-alanine. The chain is Aspartate 1-decarboxylase from Neisseria meningitidis serogroup B (strain ATCC BAA-335 / MC58).